The chain runs to 212 residues: Redox-sensing transcriptional repressor Rex (212 aa).

A DNA-binding region (H-T-H motif) is located at residues 17–56 (LYARSLRYLLEEGIHSVSSQELGERINVTAAQIRKDLSYF). 91-96 (GIGLLG) contacts NAD(+).

Belongs to the transcriptional regulatory Rex family. Homodimer.

Its subcellular location is the cytoplasm. Functionally, modulates transcription in response to changes in cellular NADH/NAD(+) redox state. The chain is Redox-sensing transcriptional repressor Rex from Chloroflexus aggregans (strain MD-66 / DSM 9485).